Reading from the N-terminus, the 921-residue chain is Translation initiation factor IF-2 (921 aa).

Residues 1 to 296 (MADNNTPGDK…PGPQKQRGRL (296 aa)) are disordered. Residues 80-89 (RPSGPRPGSS) show a composition bias toward low complexity. Basic and acidic residues predominate over residues 116-182 (ARVRDMEERR…AKKRFGEGEA (67 aa)). A compositionally biased stretch (low complexity) spans 183–257 (PRPATAAPQQ…LGRAPGVAAG (75 aa)). Residues 417 to 586 (PRSPVVTVMG…MIALQADILD (170 aa)) form the tr-type G domain. The interval 426–433 (GHVDHGKT) is G1. GTP is bound at residue 426–433 (GHVDHGKT). A G2 region spans residues 451 to 455 (GITQH). Residues 474–477 (DTPG) form a G3 region. GTP-binding positions include 474-478 (DTPGH) and 528-531 (NKID). A G4 region spans residues 528-531 (NKID). Residues 564-566 (SAK) are G5.

The protein belongs to the TRAFAC class translation factor GTPase superfamily. Classic translation factor GTPase family. IF-2 subfamily.

The protein resides in the cytoplasm. Its function is as follows. One of the essential components for the initiation of protein synthesis. Protects formylmethionyl-tRNA from spontaneous hydrolysis and promotes its binding to the 30S ribosomal subunits. Also involved in the hydrolysis of GTP during the formation of the 70S ribosomal complex. The polypeptide is Translation initiation factor IF-2 (Bradyrhizobium sp. (strain BTAi1 / ATCC BAA-1182)).